The chain runs to 189 residues: Elongation factor P (189 aa).

Lysine 34 carries the post-translational modification N6-(3,6-diaminohexanoyl)-5-hydroxylysine.

The protein belongs to the elongation factor P family. In terms of processing, may be beta-lysylated on the epsilon-amino group of Lys-34 by the combined action of EpmA and EpmB, and then hydroxylated on the C5 position of the same residue by EpmC (if this protein is present). Lysylation is critical for the stimulatory effect of EF-P on peptide-bond formation. The lysylation moiety may extend toward the peptidyltransferase center and stabilize the terminal 3-CCA end of the tRNA. Hydroxylation of the C5 position on Lys-34 may allow additional potential stabilizing hydrogen-bond interactions with the P-tRNA.

It is found in the cytoplasm. Its pathway is protein biosynthesis; polypeptide chain elongation. In terms of biological role, involved in peptide bond synthesis. Alleviates ribosome stalling that occurs when 3 or more consecutive Pro residues or the sequence PPG is present in a protein, possibly by augmenting the peptidyl transferase activity of the ribosome. Modification of Lys-34 is required for alleviation. The chain is Elongation factor P from Halorhodospira halophila (strain DSM 244 / SL1) (Ectothiorhodospira halophila (strain DSM 244 / SL1)).